The chain runs to 237 residues: uncharacterized protein (237 aa).

Positions 1 to 28 (MNRPLLSVAGSLFVAAWALYIFSCFQHG) are cleaved as a signal peptide. The segment at 52 to 96 (NARDTAAHPSDTADNTSGSSTTTDPRSHGNAPPAPVGGAAQTHTQ) is disordered. Polar residues predominate over residues 63–75 (TADNTSGSSTTTD).

This is an uncharacterized protein from Treponema pallidum (strain Nichols).